Here is a 413-residue protein sequence, read N- to C-terminus: MAVNFPSIDPAQLHPVAGVTLGWAEANIRKPNRKDVLVVSVEEGATVSGVFTENRFCAAPVTVCREHLAKVRAGGAGIRALVVNTGNANAGTGEPGLAHARETCAELARLAGIAPGQVLPFSTGVILEPLPIERLKAGLPAALANRAAANWHDAAQAIMTTDTLPKAASRQVTIDGHTITLTGISKGAGMIKPNMATMLGFLAFDAKVAQPVLDALAKDVADHSFNCITIDGDTSTNDSFILIASGKASLPQIASTDSPAYAALREAVTAVAQALAQLIVRDGEGATKFITVTVEGGKSAAECRQIAYAIGHSPLVKTAFYASDPNLGRILAAIGYAGVADLDVGKIDLYLDDVLVAKAGGRNPAYLEEDGQRVMKQSEIAVRVLLGRGDAQATIWTCDLSHDYVSINADYRS.

Substrate is bound by residues T160, K186, T197, E284, N408, and S413. T197 functions as the Nucleophile in the catalytic mechanism.

Belongs to the ArgJ family. Heterotetramer of two alpha and two beta chains.

It localises to the cytoplasm. It catalyses the reaction N(2)-acetyl-L-ornithine + L-glutamate = N-acetyl-L-glutamate + L-ornithine. The catalysed reaction is L-glutamate + acetyl-CoA = N-acetyl-L-glutamate + CoA + H(+). Its pathway is amino-acid biosynthesis; L-arginine biosynthesis; L-ornithine and N-acetyl-L-glutamate from L-glutamate and N(2)-acetyl-L-ornithine (cyclic): step 1/1. It participates in amino-acid biosynthesis; L-arginine biosynthesis; N(2)-acetyl-L-ornithine from L-glutamate: step 1/4. Catalyzes two activities which are involved in the cyclic version of arginine biosynthesis: the synthesis of N-acetylglutamate from glutamate and acetyl-CoA as the acetyl donor, and of ornithine by transacetylation between N(2)-acetylornithine and glutamate. This is Arginine biosynthesis bifunctional protein ArgJ from Burkholderia pseudomallei (strain K96243).